Consider the following 474-residue polypeptide: Nuclear receptor ROR-alpha B (474 aa).

The nuclear receptor DNA-binding region spans 14–89; the sequence is SIPCKICGDK…VGMSRDAVKF (76 aa). 2 NR C4-type zinc fingers span residues 17–37 and 53–72; these read CKICGDKSSGIHYGVITCEGC and CPRQKSCLIDRTSRNRCQHC. Basic and acidic residues predominate over residues 98-124; the sequence is DSLFAEVQKHRQQQQDDKTGDESEKNQ. Positions 98–144 are disordered; the sequence is DSLFAEVQKHRQQQQDDKTGDESEKNQESQAPGEAEPLTPSYALSSS. The region spanning 223–461 is the NR LBD domain; that stretch reads DLEHLSENIC…TRFPPLYKEL (239 aa). The interval 450-461 is AF-2; it reads VHTRFPPLYKEL.

The protein belongs to the nuclear hormone receptor family.

The protein localises to the nucleus. Its function is as follows. Nuclear receptor that binds DNA as a monomer to ROR response elements (RORE). Required for proper cerebellum development. This is Nuclear receptor ROR-alpha B (rorab) from Danio rerio (Zebrafish).